We begin with the raw amino-acid sequence, 214 residues long: Adenylate kinase (214 aa).

10 to 15 (GAGKGT) provides a ligand contact to ATP. An NMP region spans residues 30–59 (STGDMLRAAVKAQTPVGLKAKAVMDRGELV). AMP is bound by residues Thr31, Arg36, 57–59 (ELV), 85–88 (GYPR), and Gln92. An LID region spans residues 126–163 (GRFTCAKCGTGYHDRHKQPAREGVCDVCGSTEFKRRPD). ATP is bound at residue Arg127. Cys130, Cys133, Cys150, and Cys153 together coordinate Zn(2+). AMP is bound by residues Arg160 and Arg172. Gly200 provides a ligand contact to ATP.

The protein belongs to the adenylate kinase family. Monomer.

It localises to the cytoplasm. It catalyses the reaction AMP + ATP = 2 ADP. The protein operates within purine metabolism; AMP biosynthesis via salvage pathway; AMP from ADP: step 1/1. Catalyzes the reversible transfer of the terminal phosphate group between ATP and AMP. Plays an important role in cellular energy homeostasis and in adenine nucleotide metabolism. The sequence is that of Adenylate kinase from Erythrobacter litoralis (strain HTCC2594).